A 488-amino-acid chain; its full sequence is (S)-canadine synthase CYP719A21 (488 aa).

The helical transmembrane segment at 6 to 26 (LWILTLISTILAVFAAVLIIF) threads the bilayer. Cys-432 is a heme binding site.

It belongs to the cytochrome P450 family. It depends on heme as a cofactor.

Its subcellular location is the membrane. It catalyses the reaction (S)-tetrahydrocolumbamine + reduced [NADPH--hemoprotein reductase] + O2 = (S)-canadine + oxidized [NADPH--hemoprotein reductase] + 2 H2O + H(+). It functions in the pathway alkaloid biosynthesis. Its function is as follows. Cytochrome P450 involved in the biosynthesis of the benzylisoquinoline alkaloid noscapine. Converts (S)-tetrahydrocolumbamine to (S)-canadine. The protein is (S)-canadine synthase CYP719A21 of Papaver somniferum (Opium poppy).